The chain runs to 173 residues: Disulfide bond formation protein B (173 aa).

At 1–14 the chain is on the cytoplasmic side; it reads MIEFLRRIAAHRLA. A helical transmembrane segment spans residues 15-31; it reads WGLLAASALFLELSALF. Topologically, residues 32 to 49 are periplasmic; sequence FQYVLGLHPCVMCVYERL. The cysteines at positions 41 and 44 are disulfide-linked. The helical transmembrane segment at 50–65 threads the bilayer; it reads AILGVLSAGLLGMVAP. The Cytoplasmic segment spans residues 66–72; sequence EKWYLRW. A helical transmembrane segment spans residues 73–90; it reads SALLLWGYSAFRGLQLAL. The Periplasmic portion of the chain corresponds to 91 to 145; the sequence is KHVDYQMNPSPFNVCSPFADFPSWAPLDQWLPWLFFPDGDCSEISWQFLSFSMPQ. Cys-105 and Cys-131 are joined by a disulfide. Residues 146-164 form a helical membrane-spanning segment; sequence WLVAIFAAYLLVFVVVTIG. At 165-173 the chain is on the cytoplasmic side; sequence NLVKGRCCS.

This sequence belongs to the DsbB family.

Its subcellular location is the cell inner membrane. In terms of biological role, required for disulfide bond formation in some periplasmic proteins. Acts by oxidizing the DsbA protein. The sequence is that of Disulfide bond formation protein B from Aeromonas salmonicida (strain A449).